The chain runs to 137 residues: Holo-[acyl-carrier-protein] synthase (137 aa).

Mg(2+) contacts are provided by aspartate 7 and glutamate 58.

It belongs to the P-Pant transferase superfamily. AcpS family. Mg(2+) serves as cofactor.

The protein resides in the cytoplasm. It catalyses the reaction apo-[ACP] + CoA = holo-[ACP] + adenosine 3',5'-bisphosphate + H(+). Its function is as follows. Transfers the 4'-phosphopantetheine moiety from coenzyme A to a Ser of acyl-carrier-protein. The chain is Holo-[acyl-carrier-protein] synthase from Chloroflexus aurantiacus (strain ATCC 29366 / DSM 635 / J-10-fl).